The sequence spans 549 residues: Efflux pump patC (549 aa).

Positions 1–12 are enriched in polar residues; sequence MAESTAHTSPSL. The disordered stretch occupies residues 1 to 40; sequence MAESTAHTSPSLNDKEREVDQGILSDESGPAEEVKETPDQ. 14 helical membrane-spanning segments follow: residues 50–70, 85–105, 116–136, 146–166, 178–198, 206–226, 252–272, 282–302, 321–341, 360–380, 385–405, 419–439, 460–482, and 526–546; these read LLICIAVFSANLLYGLDNTIV, AQLGWLGVGFTLGSVVFILPL, WLFIGCLTMFAAGSALCGGAP, VWAGAGGAGMYLGNLNLITIL, LVGLIYGVGCILGPIIGGAFA, WGFYINLIIFGIMAPIYVFLL, VLSAGMHVSFILFIVFGGVMW, LYVVAAVTLIAFALSQYFCVL, IALYVLMACGGAALFVAVYYI, LLPFICFYVATILLCGWLMPK, VLWYLLSGIFMVIGSATMYTV, ILLGLGMATTQAAYAVGPSLV, LLGLAIASAIFQSETLSGLNALL, and VYVMAIAAGALYVIASCFLPW.

This sequence belongs to the major facilitator superfamily. TCR/Tet family.

Its subcellular location is the vacuole membrane. It localises to the cell membrane. In terms of biological role, efflux pump; part of the gene cluster that mediates the biosynthesis of patulin, an acetate-derived tetraketide mycotoxin produced by several fungal species that shows antimicrobial properties against several bacteria. May be involved in the secretion of E-ascladiol to be converted to patulin by the secreted patulin synthase patE. The sequence is that of Efflux pump patC from Aspergillus clavatus (strain ATCC 1007 / CBS 513.65 / DSM 816 / NCTC 3887 / NRRL 1 / QM 1276 / 107).